The following is a 492-amino-acid chain: Sestrin-1 (492 aa).

The segment at 71-252 is N-terminal domain; may mediate the alkylhydroperoxide reductase activity; sequence FADSFAALGR…ICDITNGNHS (182 aa). Catalysis depends on C130, which acts as the Cysteine sulfenic acid (-SOH) intermediate. Residues S293 and S314 each carry the phosphoserine modification. Residues 321–492 form a C-terminal domain; mediates TORC1 regulation region; that stretch reads PARDVSRHFE…ALRAITRYMT (172 aa). Residues 386 to 389, T398, and E463 contribute to the L-leucine site; that span reads TYNT.

It belongs to the sestrin family. Interacts with the GATOR2 complex which is composed of MIOS, SEC13, SEH1L, WDR24 and WDR59; the interaction is negatively regulated by leucine. Interacts with RRAGA, RRAGB, RRAGC and RRAGD; may function as a guanine nucleotide dissociation inhibitor for RRAGs and regulate them. Interacts with KEAP1, RBX1 and SQSTM1; in the SQSTM1-dependent autophagic degradation of KEAP1. May interact with PRDX1.

It is found in the nucleus. It localises to the cytoplasm. It carries out the reaction a hydroperoxide + L-cysteinyl-[protein] = S-hydroxy-L-cysteinyl-[protein] + an alcohol. In terms of biological role, functions as an intracellular leucine sensor that negatively regulates the TORC1 signaling pathway through the GATOR complex. In absence of leucine, binds the GATOR subcomplex GATOR2 and prevents TORC1 signaling. Binding of leucine to SESN2 disrupts its interaction with GATOR2 thereby activating the TORC1 signaling pathway. This stress-inducible metabolic regulator may also play a role in protection against oxidative and genotoxic stresses. May positively regulate the transcription by NFE2L2 of genes involved in the response to oxidative stress by facilitating the SQSTM1-mediated autophagic degradation of KEAP1. Moreover, may prevent the accumulation of reactive oxygen species (ROS) through the alkylhydroperoxide reductase activity born by the N-terminal domain of the protein. Was originally reported to contribute to oxidative stress resistance by reducing PRDX1. However, this could not be confirmed. In Macaca fascicularis (Crab-eating macaque), this protein is Sestrin-1.